The chain runs to 616 residues: Chaperone protein HscA (616 aa).

Belongs to the heat shock protein 70 family.

Its function is as follows. Chaperone involved in the maturation of iron-sulfur cluster-containing proteins. Has a low intrinsic ATPase activity which is markedly stimulated by HscB. Involved in the maturation of IscU. This chain is Chaperone protein HscA, found in Escherichia coli O45:K1 (strain S88 / ExPEC).